A 318-amino-acid chain; its full sequence is tRNA uridine(34) hydroxylase (318 aa).

Residues 123–217 form the Rhodanese domain; sequence EDDDTVIIDA…YGKDPETKGQ (95 aa). C177 serves as the catalytic Cysteine persulfide intermediate.

It belongs to the TrhO family.

The enzyme catalyses uridine(34) in tRNA + AH2 + O2 = 5-hydroxyuridine(34) in tRNA + A + H2O. Its function is as follows. Catalyzes oxygen-dependent 5-hydroxyuridine (ho5U) modification at position 34 in tRNAs. This is tRNA uridine(34) hydroxylase from Staphylococcus aureus (strain bovine RF122 / ET3-1).